The primary structure comprises 65 residues: Alpha-toxin BeM10 (65 aa).

Positions 2 to 65 (RDGYIADDKD…IKQKVSGKCN (64 aa)) constitute an LCN-type CS-alpha/beta domain. 4 cysteine pairs are disulfide-bonded: Cys12–Cys64, Cys16–Cys35, Cys22–Cys45, and Cys26–Cys47.

The protein belongs to the long (4 C-C) scorpion toxin superfamily. Sodium channel inhibitor family. Alpha subfamily. Expressed by the venom gland.

Its subcellular location is the secreted. In terms of biological role, alpha toxins bind voltage-independently at site-3 of sodium channels (Nav) and inhibit the inactivation of the activated channels, thereby blocking neuronal transmission. Has paralytic activity in mice. This is Alpha-toxin BeM10 from Mesobuthus eupeus (Lesser Asian scorpion).